Consider the following 447-residue polypeptide: Putative branched-chain amino acid carrier protein SERP0977 (447 aa).

Helical transmembrane passes span 5 to 25 (TWII…LIFP), 40 to 60 (ILAF…VGAL), 74 to 94 (PRFS…LFAI), 114 to 134 (GNLA…YLCL), 143 to 163 (IGSL…IKGF), 193 to 213 (GYLT…VNAI), 229 to 249 (IIAG…LGYI), 290 to 310 (LLGI…IVSV), 317 to 337 (IIPK…SFIL), 350 to 370 (VPVL…ILIA), 382 to 402 (IPLI…QGWI), and 417 to 437 (LEWF…SYFV).

This sequence belongs to the branched chain amino acid transporter family.

It localises to the cell membrane. Functionally, component of the transport system for branched-chain amino acids (leucine, isoleucine and valine), which is coupled to a proton motive force. The protein is Putative branched-chain amino acid carrier protein SERP0977 of Staphylococcus epidermidis (strain ATCC 35984 / DSM 28319 / BCRC 17069 / CCUG 31568 / BM 3577 / RP62A).